A 167-amino-acid polypeptide reads, in one-letter code: Ribonuclease P protein subunit p20 (167 aa).

Positions 1 to 36 are disordered; that stretch reads MMGSNYPEHGTKPRSAKYHKQQNHRVVRKQPPRPAV. Residues 12 to 31 show a composition bias toward basic residues; that stretch reads KPRSAKYHKQQNHRVVRKQP.

Interacts with Smn.

The protein localises to the nucleus. It is found in the nucleolus. It localises to the cytoplasm. Its subcellular location is the cytoplasmic granule. Functionally, component of ribonuclease P, a protein complex that generates mature tRNA molecules by cleaving their 5'-ends. Also a component of RNase MRP complex, which cleaves pre-rRNA sequences. The protein is Ribonuclease P protein subunit p20 of Drosophila melanogaster (Fruit fly).